The sequence spans 542 residues: Sialate O-acetylesterase (542 aa).

The N-terminal stretch at M1–G23 is a signal peptide. 8 N-linked (GlcNAc...) asparagine glycosylation sites follow: N107, N138, N188, N294, N357, N428, N449, and N463.

In terms of assembly, disulfide-linked heterodimer of a small subunit and a large subunit. In terms of processing, the two subunits are derived from a single precursor by proteolytic cleavage. Glycosylated. In terms of tissue distribution, widely expressed.

It localises to the lysosome. The catalysed reaction is N-acetyl-9-O-acetylneuraminate + H2O = N-acetylneuraminate + acetate + H(+). It catalyses the reaction an Ac-O-9-sialoglycoconjugate + H2O = a sialoglycoconjugate + acetate + H(+). Its activity is regulated as follows. Inhibited by diisopropyl fluorophosphate and diethyl-P-nitrophenyl phosphate. Catalyzes the removal of O-acetyl ester groups from position 9 of the free diacetylated sialate N-acetyl-9-O-acetylneuraminate (Neu5,9Ac2) in the cytosol and of the diacetylated sialate residues of sialylglycoconjugates in the lysosomes. Together with the sialate-O-acetyltransferase they regulate the balance of acetylated sialoglycoconjugates, key players in various processes such as cell-cell interactions, host-pathogen recognition, and tumor antigenicity. The chain is Sialate O-acetylesterase (Siae) from Rattus norvegicus (Rat).